The following is a 162-amino-acid chain: NADH-quinone oxidoreductase subunit I (162 aa).

2 consecutive 4Fe-4S ferredoxin-type domains span residues 53–83 (LRRY…IEAE) and 93–122 (TRYD…EGPN). Positions 63, 66, 69, 73, 102, 105, 108, and 112 each coordinate [4Fe-4S] cluster.

It belongs to the complex I 23 kDa subunit family. NDH-1 is composed of 14 different subunits. Subunits NuoA, H, J, K, L, M, N constitute the membrane sector of the complex. Requires [4Fe-4S] cluster as cofactor.

It is found in the cell inner membrane. It catalyses the reaction a quinone + NADH + 5 H(+)(in) = a quinol + NAD(+) + 4 H(+)(out). NDH-1 shuttles electrons from NADH, via FMN and iron-sulfur (Fe-S) centers, to quinones in the respiratory chain. The immediate electron acceptor for the enzyme in this species is believed to be ubiquinone. Couples the redox reaction to proton translocation (for every two electrons transferred, four hydrogen ions are translocated across the cytoplasmic membrane), and thus conserves the redox energy in a proton gradient. The polypeptide is NADH-quinone oxidoreductase subunit I (Rhodospirillum centenum (strain ATCC 51521 / SW)).